Reading from the N-terminus, the 82-residue chain is ATP synthase subunit c, chloroplastic (82 aa).

Transmembrane regions (helical) follow at residues 7-27 (AASV…PGIG) and 57-77 (LAFM…LLFA).

It belongs to the ATPase C chain family. In terms of assembly, F-type ATPases have 2 components, F(1) - the catalytic core - and F(0) - the membrane proton channel. F(1) has five subunits: alpha(3), beta(3), gamma(1), delta(1), epsilon(1). F(0) has four main subunits: a(1), b(1), b'(1) and c(10-14). The alpha and beta chains form an alternating ring which encloses part of the gamma chain. F(1) is attached to F(0) by a central stalk formed by the gamma and epsilon chains, while a peripheral stalk is formed by the delta, b and b' chains.

Its subcellular location is the plastid. It localises to the chloroplast thylakoid membrane. In terms of biological role, f(1)F(0) ATP synthase produces ATP from ADP in the presence of a proton or sodium gradient. F-type ATPases consist of two structural domains, F(1) containing the extramembraneous catalytic core and F(0) containing the membrane proton channel, linked together by a central stalk and a peripheral stalk. During catalysis, ATP synthesis in the catalytic domain of F(1) is coupled via a rotary mechanism of the central stalk subunits to proton translocation. Key component of the F(0) channel; it plays a direct role in translocation across the membrane. A homomeric c-ring of between 10-14 subunits forms the central stalk rotor element with the F(1) delta and epsilon subunits. The chain is ATP synthase subunit c, chloroplastic from Rhodomonas salina (Cryptomonas salina).